The following is a 92-amino-acid chain: Small ribosomal subunit protein bS20 (92 aa).

The tract at residues 1–23 (MANTPSAKKRAKQAEKRRSHNAS) is disordered. A compositionally biased stretch (basic residues) spans 7 to 20 (AKKRAKQAEKRRSH).

The protein belongs to the bacterial ribosomal protein bS20 family.

Its function is as follows. Binds directly to 16S ribosomal RNA. The chain is Small ribosomal subunit protein bS20 from Pseudomonas entomophila (strain L48).